The sequence spans 438 residues: 3-phosphoshikimate 1-carboxyvinyltransferase (438 aa).

Residue lysine 21 coordinates phosphoenolpyruvate. 3-phosphoshikimate is bound by residues serine 22 and arginine 26. The interval 93–96 (NSGT) is phosphoenolpyruvate. Phosphoenolpyruvate is bound by residues glycine 95, threonine 96, and arginine 123. 3-phosphoshikimate-binding residues include serine 167, alanine 168, glutamine 169, aspartate 315, and lysine 342. Glutamine 169 lines the phosphoenolpyruvate pocket. Residue aspartate 315 is the Proton acceptor of the active site. 2 residues coordinate phosphoenolpyruvate: arginine 346 and arginine 387.

Belongs to the EPSP synthase family. In terms of assembly, homodimer or homotetramer.

The protein resides in the cytoplasm. The catalysed reaction is 3-phosphoshikimate + phosphoenolpyruvate = 5-O-(1-carboxyvinyl)-3-phosphoshikimate + phosphate. It functions in the pathway metabolic intermediate biosynthesis; chorismate biosynthesis; chorismate from D-erythrose 4-phosphate and phosphoenolpyruvate: step 6/7. In terms of biological role, catalyzes the transfer of the enolpyruvyl moiety of phosphoenolpyruvate (PEP) to the 5-hydroxyl of shikimate-3-phosphate (S3P) to produce enolpyruvyl shikimate-3-phosphate and inorganic phosphate. This Coxiella burnetii (strain RSA 493 / Nine Mile phase I) protein is 3-phosphoshikimate 1-carboxyvinyltransferase.